Here is a 149-residue protein sequence, read N- to C-terminus: D-aminoacyl-tRNA deacylase (149 aa).

The Gly-cisPro motif, important for rejection of L-amino acids motif lies at 137 to 138; it reads GP.

Belongs to the DTD family. Homodimer.

The protein resides in the cytoplasm. The catalysed reaction is glycyl-tRNA(Ala) + H2O = tRNA(Ala) + glycine + H(+). It carries out the reaction a D-aminoacyl-tRNA + H2O = a tRNA + a D-alpha-amino acid + H(+). Its function is as follows. An aminoacyl-tRNA editing enzyme that deacylates mischarged D-aminoacyl-tRNAs. Also deacylates mischarged glycyl-tRNA(Ala), protecting cells against glycine mischarging by AlaRS. Acts via tRNA-based rather than protein-based catalysis; rejects L-amino acids rather than detecting D-amino acids in the active site. By recycling D-aminoacyl-tRNA to D-amino acids and free tRNA molecules, this enzyme counteracts the toxicity associated with the formation of D-aminoacyl-tRNA entities in vivo and helps enforce protein L-homochirality. The protein is D-aminoacyl-tRNA deacylase of Thermoanaerobacter pseudethanolicus (strain ATCC 33223 / 39E) (Clostridium thermohydrosulfuricum).